A 41-amino-acid polypeptide reads, in one-letter code: Large ribosomal subunit protein bL36 (41 aa).

This sequence belongs to the bacterial ribosomal protein bL36 family.

This is Large ribosomal subunit protein bL36 from Methylobacterium nodulans (strain LMG 21967 / CNCM I-2342 / ORS 2060).